A 122-amino-acid polypeptide reads, in one-letter code: Large ribosomal subunit protein uL14c (122 aa).

It belongs to the universal ribosomal protein uL14 family. Part of the 50S ribosomal subunit.

It localises to the plastid. The protein localises to the chloroplast. Binds to 23S rRNA. The protein is Large ribosomal subunit protein uL14c of Chlamydomonas reinhardtii (Chlamydomonas smithii).